A 272-amino-acid polypeptide reads, in one-letter code: Phosphoglycolate phosphatase (272 aa).

The active-site Nucleophile is Asp19. The Mg(2+) site is built by Asp19, Asp21, and Asp182.

This sequence belongs to the HAD-like hydrolase superfamily. CbbY/CbbZ/Gph/YieH family. Mg(2+) serves as cofactor.

The enzyme catalyses 2-phosphoglycolate + H2O = glycolate + phosphate. The protein operates within organic acid metabolism; glycolate biosynthesis; glycolate from 2-phosphoglycolate: step 1/1. In terms of biological role, specifically catalyzes the dephosphorylation of 2-phosphoglycolate. Is involved in the dissimilation of the intracellular 2-phosphoglycolate formed during the DNA repair of 3'-phosphoglycolate ends, a major class of DNA lesions induced by oxidative stress. This is Phosphoglycolate phosphatase from Pseudomonas fluorescens (strain ATCC BAA-477 / NRRL B-23932 / Pf-5).